A 504-amino-acid chain; its full sequence is PE-PGRS family protein PE_PGRS62 (504 aa).

The PE domain maps to 4-94 (VVTVPEAVAA…AAYLNTESAN (91 aa)).

The protein belongs to the mycobacterial PE family. PGRS subfamily. In terms of assembly, interacts with host Toll-like receptor 2 (TLR2).

It localises to the secreted. Its subcellular location is the cell wall. Functionally, supports mycobacterial virulence via inhibition of phagosome maturation and host inducible nitric oxide synthase (iNOS) expression. May promote the survival within macrophages by disturbing the cytokines profiles and blocking the endoplasmic reticulum (ER) stress-mediated apoptosis. May also affect bacterial cell wall composition. Expression in Mycobacterium smegmatis, a nonpathogenic species naturally deficient in PE_PGRS genes, results in enhanced resistance to various in vitro stresses. It also leads to phagosome maturation arrest and increased survival in macrophages. This chain is PE-PGRS family protein PE_PGRS62, found in Mycobacterium tuberculosis (strain ATCC 25618 / H37Rv).